We begin with the raw amino-acid sequence, 358 residues long: Peptide chain release factor 1 (358 aa).

Gln235 is modified (N5-methylglutamine). The disordered stretch occupies residues 284–309 (KVESERSASRKSQVGSGDRSERIRTY).

This sequence belongs to the prokaryotic/mitochondrial release factor family. In terms of processing, methylated by PrmC. Methylation increases the termination efficiency of RF1.

Its subcellular location is the cytoplasm. Its function is as follows. Peptide chain release factor 1 directs the termination of translation in response to the peptide chain termination codons UAG and UAA. This chain is Peptide chain release factor 1, found in Bartonella tribocorum (strain CIP 105476 / IBS 506).